The following is a 487-amino-acid chain: ATP-dependent rRNA helicase RRP3 (487 aa).

Positions 22-67 (IKRKALEKQQQAHANEPSPSDEDSAQSNSKDSNSNEQPEESEEIFE) are disordered. The short motif at 67–95 (ESFTELDLVPELIEACKNLNYNKPTPIQS) is the Q motif element. In terms of domain architecture, Helicase ATP-binding spans 98–270 (IPPALKGSDI…RASLTNPVKC (173 aa)). Residue 111 to 118 (AQTGSGKT) participates in ATP binding. Positions 217–220 (DEAD) match the DEAD box motif. The Helicase C-terminal domain maps to 298–442 (LIYLLNEFIG…ENVDKDAILA (145 aa)). A disordered region spans residues 459-487 (NRRNKEKQARGKGRRGRMATRDNMDREER). The segment covering 477-487 (ATRDNMDREER) has biased composition (basic and acidic residues).

The protein belongs to the DEAD box helicase family. DDX47/RRP3 subfamily. Interacts with the SSU processome.

The protein resides in the nucleus. It carries out the reaction ATP + H2O = ADP + phosphate + H(+). ATP-dependent rRNA helicase required for pre-ribosomal RNA processing. Involved in the maturation of the 35S-pre-rRNA and to its cleavage to mature 18S rRNA. The protein is ATP-dependent rRNA helicase RRP3 of Kluyveromyces lactis (strain ATCC 8585 / CBS 2359 / DSM 70799 / NBRC 1267 / NRRL Y-1140 / WM37) (Yeast).